The following is an 81-amino-acid chain: Exodeoxyribonuclease 7 small subunit (81 aa).

Basic and acidic residues predominate over residues 60–70 (LVDKDGNEKAL). The segment at 60–81 (LVDKDGNEKALDPQNASAPEEE) is disordered.

This sequence belongs to the XseB family. As to quaternary structure, heterooligomer composed of large and small subunits.

Its subcellular location is the cytoplasm. The enzyme catalyses Exonucleolytic cleavage in either 5'- to 3'- or 3'- to 5'-direction to yield nucleoside 5'-phosphates.. Its function is as follows. Bidirectionally degrades single-stranded DNA into large acid-insoluble oligonucleotides, which are then degraded further into small acid-soluble oligonucleotides. This Lactobacillus johnsonii (strain CNCM I-12250 / La1 / NCC 533) protein is Exodeoxyribonuclease 7 small subunit.